Reading from the N-terminus, the 1179-residue chain is Integrin alpha-1 (1179 aa).

The signal sequence occupies residues 1–28; the sequence is MAPRPRARPGVAVACCWLLTVVLRCCVS. The Extracellular portion of the chain corresponds to 29-1141; sequence FNVDVKNSMT…SKDGLPGRVP (1113 aa). An FG-GAP 1 repeat occupies 30-91; it reads NVDVKNSMTF…CPVGRGESLP (62 aa). A glycan (N-linked (GlcNAc...) asparagine) is linked at Asn-74. Cysteines 82 and 92 form a disulfide. Residues Asn-100, Asn-105, Asn-112, Asn-217, Asn-317, Asn-341, Asn-402, Asn-418, and Asn-460 are each glycosylated (N-linked (GlcNAc...) asparagine). Residues 101–160 form an FG-GAP 2 repeat; sequence TSIPNVTEVKENMTFGSTLVTNPNGGFLACGPLYAYRCGHLHYTTGICSDVSPTFQVVNS. A VWFA domain is found at 161–360; the sequence is IAPVQECSTQ…IVKTLGERIF (200 aa). Residues 365–417 form an FG-GAP 3 repeat; it reads TADQSAASFEMEMSQTGFSAHYSQDWVMLGAVGAYDWNGTVVMQKASQIIIPR. FG-GAP repeat units follow at residues 422–475, 476–538, 557–615, and 619–679; these read NVES…DGNI, KILQ…RFEY, SCTT…TIRK, and QRIP…FEPN. The Ca(2+) site is built by Asp-498, Asp-500, Asp-502, and Asp-506. N-linked (GlcNAc...) asparagine glycosylation is present at Asn-532. Asp-580, Asn-582, Asp-584, Asp-588, Asp-642, Asn-644, Asp-646, and Asp-650 together coordinate Ca(2+). Residues Cys-688 and Cys-697 are joined by a disulfide bond. Residues Asn-699, Asn-748, and Asn-780 are each glycosylated (N-linked (GlcNAc...) asparagine). An intrachain disulfide couples Cys-703 to Cys-756. Cys-808 and Cys-814 are disulfide-bonded. Asn-840, Asn-883, Asn-908, Asn-915, Asn-939, Asn-966, Asn-974, and Asn-1008 each carry an N-linked (GlcNAc...) asparagine glycan. A disulfide bond links Cys-878 and Cys-886. 2 disulfide bridges follow: Cys-1030–Cys-1062 and Cys-1065–Cys-1072. Asn-1073, Asn-1083, Asn-1102, and Asn-1113 each carry an N-linked (GlcNAc...) asparagine glycan. A helical membrane pass occupies residues 1142–1164; that stretch reads LWVILLSAFAGLLLLMLLILALW. Residues 1165–1179 are Cytoplasmic-facing; that stretch reads KIGFFKRPLKKKMEK. The GFFKR motif signature appears at 1167 to 1171; that stretch reads GFFKR.

The protein belongs to the integrin alpha chain family. Heterodimer of an alpha and a beta subunit. Alpha-1 associates with beta-1. Interacts with RAB21. Interacts (via cytoplasmic domain) with PTPN2; activates PTPN2 phosphatase activity towards EGFR and negatively regulates EGF signaling.

The protein localises to the membrane. Integrin alpha-1/beta-1 is a receptor for laminin and collagen. It recognizes the proline-hydroxylated sequence G-F-P-G-E-R in collagen. Involved in anchorage-dependent, negative regulation of EGF-stimulated cell growth. The sequence is that of Integrin alpha-1 (ITGA1) from Homo sapiens (Human).